Consider the following 312-residue polypeptide: Probable deoxyhypusine synthase (312 aa).

The active-site Nucleophile is Lys285.

It belongs to the deoxyhypusine synthase family. The cofactor is NAD(+).

It carries out the reaction [eIF5A protein]-L-lysine + spermidine = [eIF5A protein]-deoxyhypusine + propane-1,3-diamine. It participates in protein modification; eIF5A hypusination. Functionally, catalyzes the NAD-dependent oxidative cleavage of spermidine and the subsequent transfer of the butylamine moiety of spermidine to the epsilon-amino group of a specific lysine residue of the eIF-5A precursor protein to form the intermediate deoxyhypusine residue. This chain is Probable deoxyhypusine synthase, found in Saccharolobus islandicus (strain M.16.4 / Kamchatka #3) (Sulfolobus islandicus).